The sequence spans 113 residues: Protein ZEO1 (113 aa).

Over residues 1 to 16 (MSEIQNKAETAAQDVQ) the composition is skewed to polar residues. The tract at residues 1–96 (MSEIQNKAET…AVSEKKETKK (96 aa)) is disordered. S2 carries the N-acetylserine modification. A Phosphoserine modification is found at S2. The stretch at 2–97 (SEIQNKAETA…VSEKKETKKE (96 aa)) forms a coiled coil. Over residues 17-37 (QKLEETKESLQNKGQEVKEQA) the composition is skewed to basic and acidic residues. Residues K18 and K23 each participate in a glycyl lysine isopeptide (Lys-Gly) (interchain with G-Cter in ubiquitin) cross-link. S25 carries the phosphoserine modification. Glycyl lysine isopeptide (Lys-Gly) (interchain with G-Cter in ubiquitin) cross-links involve residues K29 and K34. Phosphoserine is present on S40. K45 is covalently cross-linked (Glycyl lysine isopeptide (Lys-Gly) (interchain with G-Cter in ubiquitin)). Position 49 is a phosphothreonine (T49). The span at 53–82 (EQVKKEEQNIADGVEQKKTEAANKVEETKK) shows a compositional bias: basic and acidic residues. Residues K57 and K82 each participate in a glycyl lysine isopeptide (Lys-Gly) (interchain with G-Cter in ubiquitin) cross-link.

Interacts with MID2. Phosphorylation of Ser-25 is induced 2-fold in response to mating pheromone.

It localises to the cell membrane. Acts antagonistically to MID2 in signaling cell wall stress to the PKC1-MPK1 cell integrity pathway. This Saccharomyces cerevisiae (strain ATCC 204508 / S288c) (Baker's yeast) protein is Protein ZEO1 (ZEO1).